We begin with the raw amino-acid sequence, 405 residues long: Argininosuccinate synthase (405 aa).

Residues 10–18 (AYSGGLDTS) and alanine 37 each bind ATP. L-citrulline-binding residues include tyrosine 88 and serine 93. Glycine 118 serves as a coordination point for ATP. Residues threonine 120, asparagine 124, and aspartate 125 each coordinate L-aspartate. Asparagine 124 contacts L-citrulline. 5 residues coordinate L-citrulline: arginine 128, serine 179, serine 188, glutamate 264, and tyrosine 276.

Belongs to the argininosuccinate synthase family. Type 1 subfamily. As to quaternary structure, homotetramer.

It is found in the cytoplasm. The enzyme catalyses L-citrulline + L-aspartate + ATP = 2-(N(omega)-L-arginino)succinate + AMP + diphosphate + H(+). It functions in the pathway amino-acid biosynthesis; L-arginine biosynthesis; L-arginine from L-ornithine and carbamoyl phosphate: step 2/3. This Nitrosococcus oceani (strain ATCC 19707 / BCRC 17464 / JCM 30415 / NCIMB 11848 / C-107) protein is Argininosuccinate synthase.